We begin with the raw amino-acid sequence, 713 residues long: Subtilisin-like protease SBT4.9 (713 aa).

The N-terminal stretch at 1–24 is a signal peptide; the sequence is MARRADSFCLISCVLVSFVISVSA. Residues 25–113 constitute a propeptide, activation peptide; that stretch reads VTDDSQDKQV…VFPDINYKLQ (89 aa). The Inhibitor I9 domain maps to 34-112; the sequence is VYVVYMGSLP…SVFPDINYKL (79 aa). The Peptidase S8 domain maps to 117–560; it reads SWDFLGLKEG…AGHVDPIAAI (444 aa). Asp-145 functions as the Charge relay system in the catalytic mechanism. Asn-176 carries an N-linked (GlcNAc...) asparagine glycan. The active-site Charge relay system is the His-200. Asn-215 and Asn-223 each carry an N-linked (GlcNAc...) asparagine glycan. A PA domain is found at 356–415; sequence NYPLYGGSTDGPLLRGKILVSEDKVSSEIVVANINENYHDYAYVSILPSSALSKDDFDSV. N-linked (GlcNAc...) asparagine glycosylation is present at Asn-420. Ser-499 (charge relay system) is an active-site residue. Asn-536, Asn-583, Asn-627, and Asn-637 each carry an N-linked (GlcNAc...) asparagine glycan.

It belongs to the peptidase S8 family. Post-translationally, the C-terminal propeptide is autocleaved.

It localises to the secreted. This is Subtilisin-like protease SBT4.9 from Arabidopsis thaliana (Mouse-ear cress).